Here is a 1045-residue protein sequence, read N- to C-terminus: Collagen alpha-1(VI) chain (1045 aa).

The first 24 residues, 1–24, serve as a signal peptide directing secretion; it reads MKMLQGRLPLTVLHLFLLLGGGMT. The region spanning 65–255 is the VWFA 1 domain; that stretch reads DIFFVLDTSE…LTDDEIDNTI (191 aa). Residues 277-613 form a disordered region; sequence PSRGLSGPSG…GPPGPGGPPG (337 aa). The tract at residues 280-540 is triple-helical region; the sequence is GLSGPSGPPG…RGDDGRPGNG (261 aa). Positions 297-309 are enriched in low complexity; that stretch reads PGLPGDRGLPGDP. Residues 327-360 show a composition bias toward basic and acidic residues; that stretch reads QGIRGEKGGRGAKGSKGDKGKRGIDGVDGQKGED. The span at 375–392 shows a compositional bias: low complexity; the sequence is DGAPGSSGPKGDPGPYGT. The span at 400–409 shows a compositional bias: gly residues; it reads GTPGTGGRPG. 2 consecutive short sequence motifs (cell attachment site) follow at residues 501-503 and 554-556; these read RGD. A compositionally biased stretch (pro residues) spans 600–613; sequence EGPPGPPGPGGPPG. VWFA domains are found at residues 638-825 and 849-1035; these read DLLF…LHNV and DITM…YQSI.

Belongs to the type VI collagen family.

It localises to the secreted. It is found in the extracellular space. Its subcellular location is the extracellular matrix. Functionally, collagen VI acts as a cell-binding protein. This is Collagen alpha-1(VI) chain (col6a1) from Xenopus laevis (African clawed frog).